Here is a 264-residue protein sequence, read N- to C-terminus: Undecaprenyl-diphosphatase (264 aa).

The next 7 helical transmembrane spans lie at Glu-42–Phe-62, Thr-82–Phe-102, Leu-109–Trp-129, Ala-146–Ala-166, Phe-184–Gly-204, Ile-215–Ile-235, and Leu-243–Ala-263.

Belongs to the UppP family.

Its subcellular location is the cell membrane. It catalyses the reaction di-trans,octa-cis-undecaprenyl diphosphate + H2O = di-trans,octa-cis-undecaprenyl phosphate + phosphate + H(+). Functionally, catalyzes the dephosphorylation of undecaprenyl diphosphate (UPP). Confers resistance to bacitracin. This chain is Undecaprenyl-diphosphatase, found in Christiangramia forsetii (strain DSM 17595 / CGMCC 1.15422 / KT0803) (Gramella forsetii).